Reading from the N-terminus, the 365-residue chain is DNA replication and repair protein RecF (365 aa).

30–37 is an ATP binding site; it reads GANGQGKT.

Belongs to the RecF family.

The protein resides in the cytoplasm. In terms of biological role, the RecF protein is involved in DNA metabolism; it is required for DNA replication and normal SOS inducibility. RecF binds preferentially to single-stranded, linear DNA. It also seems to bind ATP. The protein is DNA replication and repair protein RecF of Geobacter sulfurreducens (strain ATCC 51573 / DSM 12127 / PCA).